The sequence spans 802 residues: Exocyst complex component 6 (802 aa).

This sequence belongs to the SEC15 family. As to quaternary structure, the exocyst complex is composed of EXOC1, EXOC2, EXOC3, EXOC4, EXOC5, EXOC6, EXOC7 and EXOC8. Interacts with CNTRL. Interacts with RAB11A in a GTP-dependent manner.

The protein resides in the cytoplasm. Its subcellular location is the perinuclear region. It is found in the cell projection. The protein localises to the growth cone. It localises to the midbody. The protein resides in the midbody ring. In terms of biological role, component of the exocyst complex involved in the docking of exocytic vesicles with fusion sites on the plasma membrane. Together with RAB11A, RAB3IP, RAB8A, PARD3, PRKCI, ANXA2, CDC42 and DNMBP promotes transcytosis of PODXL to the apical membrane initiation sites (AMIS), apical surface formation and lumenogenesis. The chain is Exocyst complex component 6 (Exoc6) from Mus musculus (Mouse).